The following is a 620-amino-acid chain: Proline--tRNA ligase (620 aa).

The protein belongs to the class-II aminoacyl-tRNA synthetase family. ProS type 1 subfamily. As to quaternary structure, homodimer.

Its subcellular location is the cytoplasm. It carries out the reaction tRNA(Pro) + L-proline + ATP = L-prolyl-tRNA(Pro) + AMP + diphosphate. Catalyzes the attachment of proline to tRNA(Pro) in a two-step reaction: proline is first activated by ATP to form Pro-AMP and then transferred to the acceptor end of tRNA(Pro). As ProRS can inadvertently accommodate and process non-cognate amino acids such as alanine and cysteine, to avoid such errors it has two additional distinct editing activities against alanine. One activity is designated as 'pretransfer' editing and involves the tRNA(Pro)-independent hydrolysis of activated Ala-AMP. The other activity is designated 'posttransfer' editing and involves deacylation of mischarged Ala-tRNA(Pro). The misacylated Cys-tRNA(Pro) is not edited by ProRS. This Streptococcus thermophilus (strain ATCC BAA-491 / LMD-9) protein is Proline--tRNA ligase.